A 102-amino-acid polypeptide reads, in one-letter code: Urease subunit beta (102 aa).

The protein belongs to the urease beta subunit family. In terms of assembly, heterotrimer of UreA (gamma), UreB (beta) and UreC (alpha) subunits. Three heterotrimers associate to form the active enzyme.

It localises to the cytoplasm. The enzyme catalyses urea + 2 H2O + H(+) = hydrogencarbonate + 2 NH4(+). The protein operates within nitrogen metabolism; urea degradation; CO(2) and NH(3) from urea (urease route): step 1/1. This chain is Urease subunit beta, found in Blochmanniella pennsylvanica (strain BPEN).